Consider the following 238-residue polypeptide: Large ribosomal subunit protein uL1 (238 aa).

The protein belongs to the universal ribosomal protein uL1 family. In terms of assembly, part of the 50S ribosomal subunit.

Functionally, binds directly to 23S rRNA. The L1 stalk is quite mobile in the ribosome, and is involved in E site tRNA release. Protein L1 is also a translational repressor protein, it controls the translation of the L11 operon by binding to its mRNA. The chain is Large ribosomal subunit protein uL1 from Frankia alni (strain DSM 45986 / CECT 9034 / ACN14a).